The chain runs to 526 residues: Peptide chain release factor 3 (526 aa).

The 269-residue stretch at 9-277 (DKRRTFAIIS…GIVEWAPIPQ (269 aa)) folds into the tr-type G domain. GTP contacts are provided by residues 18-25 (SHPDAGKT), 86-90 (DTPGH), and 140-143 (NKLD).

Belongs to the TRAFAC class translation factor GTPase superfamily. Classic translation factor GTPase family. PrfC subfamily.

The protein localises to the cytoplasm. Functionally, increases the formation of ribosomal termination complexes and stimulates activities of RF-1 and RF-2. It binds guanine nucleotides and has strong preference for UGA stop codons. It may interact directly with the ribosome. The stimulation of RF-1 and RF-2 is significantly reduced by GTP and GDP, but not by GMP. This chain is Peptide chain release factor 3, found in Shewanella halifaxensis (strain HAW-EB4).